The following is a 375-amino-acid chain: DNA replication and repair protein RecF (375 aa).

30–37 (GENAQGKT) lines the ATP pocket.

Belongs to the RecF family.

It localises to the cytoplasm. Functionally, the RecF protein is involved in DNA metabolism; it is required for DNA replication and normal SOS inducibility. RecF binds preferentially to single-stranded, linear DNA. It also seems to bind ATP. This Bacillus cereus (strain G9842) protein is DNA replication and repair protein RecF.